The primary structure comprises 59 residues: UPF0181 protein CKO_01169 (59 aa).

It belongs to the UPF0181 family.

This Citrobacter koseri (strain ATCC BAA-895 / CDC 4225-83 / SGSC4696) protein is UPF0181 protein CKO_01169.